Here is a 258-residue protein sequence, read N- to C-terminus: MLILISPAKTLDYQSPLTTTRYTLPELLDNSQQLIHEARKLTPPQISTLMRISDKLAGINAARFHDWQPDFTPANARQAILAFKGDVYTGLQAETFSEDDFDFAQQHLRMLSGLYGVLRPLDLMQPYRLEMGIRLENARGKDLYQFWGDIITNKLNEALAAQGDNVVINLASDEYFKSVKPKKLNAEIIKPVFLDEKNGKFKIISFYAKKARGLMSRFIIENRLTKPEQLTGFNSEGYFFDEDSSSNGELVFKRYEQR.

This sequence belongs to the UPF0246 family.

This Escherichia coli (strain K12 / MC4100 / BW2952) protein is UPF0246 protein YaaA.